We begin with the raw amino-acid sequence, 238 residues long: N-acetylneuraminic acid outer membrane channel protein NanC (238 aa).

Residues 1-23 form the signal peptide; the sequence is MKKAKILSGVLLLCFSSPLISQA. Topologically, residues 24–25 are periplasmic; that stretch reads AT. Over 26-32 the chain traverses the membrane; that stretch reads LDVRGGY. At 33–39 the chain is on the extracellular side; it reads RSGSHAY. At 40–49 the chain is embedded in the membrane; sequence ETRLKVSEGW. Topologically, residues 50 to 52 are periplasmic; that stretch reads QNG. At 53–61 the chain is embedded in the membrane; it reads WWASMESNT. At 62–76 the chain is on the extracellular side; the sequence is WNTIHDNKKENAALN. Residues 77-86 are membrane-embedded; it reads DVQVEVNYAI. The Periplasmic segment spans residues 87-91; that stretch reads KLDDQ. A transmembrane helix spans residues 92 to 102; that stretch reads WTVRPGMLTHF. Over 103–107 the chain is Extracellular; it reads SSNGT. The hydrophobic stretch at 108 to 117 threads the membrane; sequence RYGPYVKLSW. The Periplasmic portion of the chain corresponds to 118–122; that stretch reads DATKD. A transmembrane helix spans residues 123 to 132; that stretch reads LKFGIRYRYD. Residues 133 to 151 lie on the Extracellular side of the membrane; that stretch reads WKAYRQQDLSGDMSRDNVH. Over 152 to 159 the chain traverses the membrane; it reads RWDGYVTY. Topologically, residues 160-164 are periplasmic; the sequence is HINSD. The segment at 165 to 173 is a transmembrane helix; that stretch reads FTFAWQTTL. Topologically, residues 174–190 are extracellular; that stretch reads YSKQNDYRYANHKKWAT. The segment at 191 to 200 is a transmembrane helix; sequence ENAFVLQYHM. Residues 201–203 lie on the Periplasmic side of the membrane; it reads TPD. At 204 to 212 the chain is embedded in the membrane; sequence ITPYIEYDY. The Extracellular portion of the chain corresponds to 213–228; that stretch reads LDRQGVYNGRDNLSEN. At 229-236 the chain is embedded in the membrane; the sequence is SYRIGVSF. The Periplasmic segment spans residues 237–238; it reads KL.

It belongs to the oligogalacturonate-specific porin KdgM (TC 1.B.35) family. NanC subfamily. As to quaternary structure, monomer.

Its subcellular location is the cell outer membrane. It catalyses the reaction N-acetylneuraminate(in) = N-acetylneuraminate(out). Its function is as follows. Outer membrane channel protein allowing the entry of N-acetylneuraminic acid (Neu5Ac, the most abundant sialic acid on host cell surfaces) into the bacteria. NanC proteins form high-conductance channels which are open at low membrane potentials and which have a weak anion selectivity. This Escherichia coli O6:H1 (strain CFT073 / ATCC 700928 / UPEC) protein is N-acetylneuraminic acid outer membrane channel protein NanC (nanC).